A 353-amino-acid chain; its full sequence is MTAILERRESESLWGRFCNWITSTENRLYIGWFGVLMIPTLLTATSVFIIAFIAAPPVDIDGIREPVSGSLLYGNNIISGAIIPTSAAIGLHFYPIWEAASVDEWLYNGGPYELIVLHFLLGVACYMGREWELSFRLGMRPWIAVAYSAPVAAATAVFLIYPIGQGSFSDGMPLGISGTFNFMIVFQAEHNILMHPFHMLGVAGVFGGSLFSAMHGSLVTSSLIRETTENESANEGYRFGQEEETYNIVAAHGYFGRLIFQYASFNNSRSLHFFLAAWPVIGIWFTALGISTMAFNLNGFNFNQSVVDSQGRVINTWADIINRANLGMEVMHERNAHNFPLDLAAVEAPSTNG.

T2 carries the post-translational modification N-acetylthreonine. Phosphothreonine is present on T2. 3 helical membrane passes run 29-46, 118-133, and 142-156; these read YIGW…TATS, HFLL…EWEL, and WIAV…AATA. H118 contributes to the chlorophyll a binding site. Y126 is a binding site for pheophytin a. [CaMn4O5] cluster contacts are provided by D170 and E189. The chain crosses the membrane as a helical span at residues 197-218; sequence FHMLGVAGVFGGSLFSAMHGSL. Residue H198 coordinates chlorophyll a. A quinone-binding positions include H215 and 264 to 265; that span reads SF. Residue H215 coordinates Fe cation. H272 serves as a coordination point for Fe cation. The helical transmembrane segment at 274 to 288 threads the bilayer; sequence FLAAWPVIGIWFTAL. H332, E333, D342, and A344 together coordinate [CaMn4O5] cluster. Positions 345-353 are excised as a propeptide; the sequence is AVEAPSTNG.

The protein belongs to the reaction center PufL/M/PsbA/D family. PSII is composed of 1 copy each of membrane proteins PsbA, PsbB, PsbC, PsbD, PsbE, PsbF, PsbH, PsbI, PsbJ, PsbK, PsbL, PsbM, PsbT, PsbX, PsbY, PsbZ, Psb30/Ycf12, at least 3 peripheral proteins of the oxygen-evolving complex and a large number of cofactors. It forms dimeric complexes. The D1/D2 heterodimer binds P680, chlorophylls that are the primary electron donor of PSII, and subsequent electron acceptors. It shares a non-heme iron and each subunit binds pheophytin, quinone, additional chlorophylls, carotenoids and lipids. D1 provides most of the ligands for the Mn4-Ca-O5 cluster of the oxygen-evolving complex (OEC). There is also a Cl(-1) ion associated with D1 and D2, which is required for oxygen evolution. The PSII complex binds additional chlorophylls, carotenoids and specific lipids. serves as cofactor. Tyr-161 forms a radical intermediate that is referred to as redox-active TyrZ, YZ or Y-Z. Post-translationally, C-terminally processed by CTPA; processing is essential to allow assembly of the oxygen-evolving complex and thus photosynthetic growth.

It is found in the plastid. The protein resides in the chloroplast thylakoid membrane. It catalyses the reaction 2 a plastoquinone + 4 hnu + 2 H2O = 2 a plastoquinol + O2. Photosystem II (PSII) is a light-driven water:plastoquinone oxidoreductase that uses light energy to abstract electrons from H(2)O, generating O(2) and a proton gradient subsequently used for ATP formation. It consists of a core antenna complex that captures photons, and an electron transfer chain that converts photonic excitation into a charge separation. The D1/D2 (PsbA/PsbD) reaction center heterodimer binds P680, the primary electron donor of PSII as well as several subsequent electron acceptors. The polypeptide is Photosystem II protein D1 (Buxus microphylla (Littleleaf boxwood)).